Here is a 450-residue protein sequence, read N- to C-terminus: UDP-N-acetylmuramoylalanine--D-glutamate ligase (450 aa).

119-125 (GSNGKTT) serves as a coordination point for ATP.

The protein belongs to the MurCDEF family.

The protein localises to the cytoplasm. It carries out the reaction UDP-N-acetyl-alpha-D-muramoyl-L-alanine + D-glutamate + ATP = UDP-N-acetyl-alpha-D-muramoyl-L-alanyl-D-glutamate + ADP + phosphate + H(+). It participates in cell wall biogenesis; peptidoglycan biosynthesis. In terms of biological role, cell wall formation. Catalyzes the addition of glutamate to the nucleotide precursor UDP-N-acetylmuramoyl-L-alanine (UMA). In Streptococcus pneumoniae serotype 19F (strain G54), this protein is UDP-N-acetylmuramoylalanine--D-glutamate ligase.